The following is a 346-amino-acid chain: Autophagy-related protein 3 (346 aa).

The segment at 85-161 (DFAGDAGHEE…DDDDEAIIRA (77 aa)) is flexible region. The Glycyl thioester intermediate role is filled by Cys238. The segment at 242–322 (SVMKTLLDRA…DQEVAIRVDQ (81 aa)) is handle region.

This sequence belongs to the ATG3 family. Monomer. Interacts with apg-6/atg8 through an intermediate thioester bond through the C-terminal Gly of apg-6/atg8. Also interacts with the 40 amino acid C-terminal region of the E1-like apg-5/atg7 enzyme. Also interacts with the atg12-apg-4/atg5 conjugate.

Its subcellular location is the cytoplasm. Functionally, E2 conjugating enzyme required for the cytoplasm to vacuole transport (Cvt) and autophagy. Required for selective autophagic degradation of the nucleus (nucleophagy) as well as for mitophagy which contributes to regulate mitochondrial quantity and quality by eliminating the mitochondria to a basal level to fulfill cellular energy requirements and preventing excess ROS production. Responsible for the E2-like covalent binding of phosphatidylethanolamine to the C-terminal Gly of apg-6/atg8. The atg12-apg-4/atg5 conjugate plays a role of an E3 and promotes the transfer of apg-6/atg8 from apg-3/atg3 to phosphatidylethanolamine (PE). This step is required for the membrane association of apg-6/atg8. The formation of the apg-6/atg8-phosphatidylethanolamine conjugate is essential for autophagy and for the cytoplasm to vacuole transport (Cvt). The apg-6/atg8-PE conjugate mediates tethering between adjacent membranes and stimulates membrane hemifusion, leading to expansion of the autophagosomal membrane during autophagy. The chain is Autophagy-related protein 3 (apg-3) from Neurospora crassa (strain ATCC 24698 / 74-OR23-1A / CBS 708.71 / DSM 1257 / FGSC 987).